The primary structure comprises 186 residues: Chromosomal replication initiator protein DnaA (186 aa).

Position 1 (E1) is a region of interest, domain I, interacts with DnaA modulators. Position 1 (E1) is a region of interest, domain II. Positions 1 to 99 (EFFKTFNALI…GALNKVTHTS (99 aa)) are domain III, AAA+ region. Residues 100-186 (LIGRSMTVES…GRNFGGRDHT (87 aa)) are domain IV, binds dsDNA.

This sequence belongs to the DnaA family. Oligomerizes as a right-handed, spiral filament on DNA at oriC.

The protein localises to the cytoplasm. Functionally, plays an essential role in the initiation and regulation of chromosomal replication. ATP-DnaA binds to the origin of replication (oriC) to initiate formation of the DNA replication initiation complex once per cell cycle. Binds the DnaA box (a 9 base pair repeat at the origin) and separates the double-stranded (ds)DNA. Forms a right-handed helical filament on oriC DNA; dsDNA binds to the exterior of the filament while single-stranded (ss)DNA is stabiized in the filament's interior. The ATP-DnaA-oriC complex binds and stabilizes one strand of the AT-rich DNA unwinding element (DUE), permitting loading of DNA polymerase. After initiation quickly degrades to an ADP-DnaA complex that is not apt for DNA replication. Binds acidic phospholipids. The sequence is that of Chromosomal replication initiator protein DnaA from Wolbachia sp.